The primary structure comprises 497 residues: Alkene monooxygenase system, oxygenase component subunit alpha (497 aa).

6 residues coordinate Fe cation: Glu104, Glu134, His137, Glu197, Glu231, and His234.

Belongs to the TmoA/XamoA family. In terms of assembly, the alkene monooxygenase multicomponent enzyme system is composed of an electron transfer component and a monooxygenase component interacting with the effector protein XamoD. The electron transfer component is composed of a ferredoxin reductase (XamoF) and a ferredoxin (XamoC), and the monooxygenase component is formed by a heterohexamer (dimer of heterotrimers) of two alpha subunits (XamoA), two beta subunits (XamoE) and two gamma subunits (XamoB). Fe(2+) serves as cofactor.

Its subcellular location is the cytoplasm. It carries out the reaction propene + NADH + O2 + H(+) = 1,2-epoxypropane + NAD(+) + H2O. Its activity is regulated as follows. Inhibited by propyne. Functionally, component of the alkene monooxygenase multicomponent enzyme system which catalyzes the O2- and NADH-dependent epoxidation of short chain (C2 to C6) alkenes to their corresponding epoxides. Also able to catalyze the oxidation of a number of chlorinated alkenes, including trichloroethylene, cis- and trans-1,2-dichloroethylene, vinyl chloride, 1-chloropropylene, 1,3-dichloropropylene and 2,3-dichloropropylene. In Xanthobacter autotrophicus (strain ATCC BAA-1158 / Py2), this protein is Alkene monooxygenase system, oxygenase component subunit alpha.